We begin with the raw amino-acid sequence, 31 residues long: Cytochrome b6-f complex subunit 6 (31 aa).

A helical transmembrane segment spans residues 4-24 (LLSYFAFLMLALTFTLALFVG).

Belongs to the PetL family. In terms of assembly, the 4 large subunits of the cytochrome b6-f complex are cytochrome b6, subunit IV (17 kDa polypeptide, PetD), cytochrome f and the Rieske protein, while the 4 small subunits are PetG, PetL, PetM and PetN. The complex functions as a dimer.

The protein localises to the plastid. It localises to the chloroplast thylakoid membrane. Functionally, component of the cytochrome b6-f complex, which mediates electron transfer between photosystem II (PSII) and photosystem I (PSI), cyclic electron flow around PSI, and state transitions. PetL is important for photoautotrophic growth as well as for electron transfer efficiency and stability of the cytochrome b6-f complex. This is Cytochrome b6-f complex subunit 6 from Adiantum capillus-veneris (Maidenhair fern).